The chain runs to 204 residues: Large ribosomal subunit protein bL25 (204 aa).

The protein belongs to the bacterial ribosomal protein bL25 family. CTC subfamily. Part of the 50S ribosomal subunit; part of the 5S rRNA/L5/L18/L25 subcomplex. Contacts the 5S rRNA. Binds to the 5S rRNA independently of L5 and L18.

Functionally, this is one of the proteins that binds to the 5S RNA in the ribosome where it forms part of the central protuberance. The chain is Large ribosomal subunit protein bL25 from Burkholderia pseudomallei (strain 668).